The sequence spans 387 residues: Cysteine desulfurase IscS (387 aa).

Residues 73–74 (AT), asparagine 155, glutamine 183, and 203–205 (SAH) each bind pyridoxal 5'-phosphate. Lysine 206 is subject to N6-(pyridoxal phosphate)lysine. Threonine 241 is a binding site for pyridoxal 5'-phosphate. The active-site Cysteine persulfide intermediate is cysteine 328. Cysteine 328 provides a ligand contact to [2Fe-2S] cluster.

This sequence belongs to the class-V pyridoxal-phosphate-dependent aminotransferase family. NifS/IscS subfamily. In terms of assembly, homodimer. Forms a heterotetramer with IscU, interacts with other sulfur acceptors. It depends on pyridoxal 5'-phosphate as a cofactor.

The protein resides in the cytoplasm. It carries out the reaction (sulfur carrier)-H + L-cysteine = (sulfur carrier)-SH + L-alanine. It functions in the pathway cofactor biosynthesis; iron-sulfur cluster biosynthesis. Its function is as follows. Master enzyme that delivers sulfur to a number of partners involved in Fe-S cluster assembly, tRNA modification or cofactor biosynthesis. Catalyzes the removal of elemental sulfur atoms from cysteine to produce alanine. Functions as a sulfur delivery protein for Fe-S cluster synthesis onto IscU, an Fe-S scaffold assembly protein, as well as other S acceptor proteins. This chain is Cysteine desulfurase IscS, found in Helicobacter pylori (strain P12).